The primary structure comprises 210 residues: Glutathione S-transferase P (210 aa).

The GST N-terminal domain occupies Ala2–Gly81. Tyr4 carries the phosphotyrosine; by EGFR modification. Glutathione-binding positions include Tyr8, Arg14, Trp39, Lys45, and Gln52–Leu53. Residue Thr62 is modified to Phosphothreonine. Gln65–Ser66 contacts glutathione. The GST C-terminal domain maps to Asp83–Ile204. N6-succinyllysine occurs at positions 103 and 116. N6-acetyllysine is present on Lys128.

It belongs to the GST superfamily. Pi family. As to quaternary structure, homodimer. Interacts with CDK5.

The protein resides in the cytoplasm. It localises to the mitochondrion. Its subcellular location is the nucleus. It catalyses the reaction RX + glutathione = an S-substituted glutathione + a halide anion + H(+). It carries out the reaction prostaglandin J2 + glutathione = prostaglandin J2-S-(R)-glutathione. The enzyme catalyses prostaglandin J2 + glutathione = prostaglandin J2-S-(S)-glutathione. The catalysed reaction is prostaglandin A2 + glutathione = prostaglandin A2-S-(S)-glutathione. It catalyses the reaction 11(S)-hydroxy-14(S),15(S)-epoxy-(5Z,8Z,12E)-eicosatrienoate + glutathione = (11S,15S)-dihydroxy-14(R)-S-glutathionyl-(5Z,8Z,12E)-eicosatrienoate. Functionally, conjugation of reduced glutathione to a wide number of exogenous and endogenous hydrophobic electrophiles. Involved in the formation of glutathione conjugates of both prostaglandin A2 (PGA2) and prostaglandin J2 (PGJ2). Participates in the formation of novel hepoxilin regioisomers. Negatively regulates CDK5 activity via p25/p35 translocation to prevent neurodegeneration. This is Glutathione S-transferase P (GSTP1) from Capra hircus (Goat).